Consider the following 396-residue polypeptide: Cathepsin E (396 aa).

The signal sequence occupies residues Met-1–Gly-19. A propeptide spans Thr-20–Met-53 (activation peptide). The 315-residue stretch at Tyr-78–Ala-392 folds into the Peptidase A1 domain. Residue Asn-90 is glycosylated (N-linked (GlcNAc...) asparagine). Asp-96 is an active-site residue. 2 cysteine pairs are disulfide-bonded: Cys-109/Cys-114 and Cys-272/Cys-276. The active site involves Asp-281. An intrachain disulfide couples Cys-314 to Cys-351.

The protein belongs to the peptidase A1 family. As to quaternary structure, homodimer; disulfide-linked. Glycosylated. The nature of the carbohydrate chain varies between cell types.

Its subcellular location is the endosome. It carries out the reaction Similar to cathepsin D, but slightly broader specificity.. In terms of biological role, may have a role in immune function. Probably involved in the processing of antigenic peptides during MHC class II-mediated antigen presentation. May play a role in activation-induced lymphocyte depletion in the thymus, and in neuronal degeneration and glial cell activation in the brain. This Oryctolagus cuniculus (Rabbit) protein is Cathepsin E (CTSE).